Reading from the N-terminus, the 122-residue chain is Large ribosomal subunit protein uL14 (122 aa).

This sequence belongs to the universal ribosomal protein uL14 family. Part of the 50S ribosomal subunit. Forms a cluster with proteins L3 and L19. In the 70S ribosome, L14 and L19 interact and together make contacts with the 16S rRNA in bridges B5 and B8.

Its function is as follows. Binds to 23S rRNA. Forms part of two intersubunit bridges in the 70S ribosome. The chain is Large ribosomal subunit protein uL14 from Caulobacter vibrioides (strain ATCC 19089 / CIP 103742 / CB 15) (Caulobacter crescentus).